A 151-amino-acid polypeptide reads, in one-letter code: Nucleoside diphosphate kinase (151 aa).

The ATP site is built by K11, F59, R87, T93, R104, and N114. H117 acts as the Pros-phosphohistidine intermediate in catalysis.

Belongs to the NDK family. The cofactor is Mg(2+).

The catalysed reaction is a 2'-deoxyribonucleoside 5'-diphosphate + ATP = a 2'-deoxyribonucleoside 5'-triphosphate + ADP. The enzyme catalyses a ribonucleoside 5'-diphosphate + ATP = a ribonucleoside 5'-triphosphate + ADP. In terms of biological role, major role in the synthesis of nucleoside triphosphates other than ATP. The ATP gamma phosphate is transferred to the NDP beta phosphate via a ping-pong mechanism, using a phosphorylated active-site intermediate. This chain is Nucleoside diphosphate kinase (NDK1), found in Eremothecium gossypii (strain ATCC 10895 / CBS 109.51 / FGSC 9923 / NRRL Y-1056) (Yeast).